The primary structure comprises 141 residues: VLSPADKTNIKSTWDKIGGHAGDYGGEALDRTFQSFPTTKTYFPHFDLSPGSAQVKAHGKKVADALTTAVAHLDDLPGALSALSDLHAYKLRVDPVNFKLLSHCLLVTLACHHPNEFTPAVHASLDKFFTAVSTVLTSKYR.

The Globin domain maps to 1-141; sequence VLSPADKTNI…VSTVLTSKYR (141 aa). Ser-3 carries the post-translational modification Phosphoserine. Lys-7 carries the post-translational modification N6-succinyllysine. Thr-8 bears the Phosphothreonine mark. N6-succinyllysine is present on Lys-11. An N6-acetyllysine; alternate modification is found at Lys-16. An N6-succinyllysine; alternate modification is found at Lys-16. Tyr-24 carries the phosphotyrosine modification. Residue Ser-35 is modified to Phosphoserine. Lys-40 is subject to N6-succinyllysine. The residue at position 49 (Ser-49) is a Phosphoserine. An O2-binding site is contributed by His-58. His-87 contacts heme b. The residue at position 102 (Ser-102) is a Phosphoserine. Phosphothreonine is present on Thr-108. Ser-124 is modified (phosphoserine). Phosphothreonine is present on residues Thr-134 and Thr-137. A Phosphoserine modification is found at Ser-138.

The protein belongs to the globin family. In terms of assembly, heterotetramer of two alpha chains and two beta chains. As to expression, red blood cells.

Its function is as follows. Involved in oxygen transport from the lung to the various peripheral tissues. Hemopressin acts as an antagonist peptide of the cannabinoid receptor CNR1. Hemopressin-binding efficiently blocks cannabinoid receptor CNR1 and subsequent signaling. This chain is Hemoglobin subunit alpha (HBA), found in Vulpes vulpes (Red fox).